Reading from the N-terminus, the 299-residue chain is Putative KilA-N domain-containing protein R879 (299 aa).

In terms of domain architecture, KilA-N spans 1–75 (MKSDNGILMS…IKVSEIVLSY (75 aa)). Residues 76-150 (HAKEAIKEKE…DKKINELLSK (75 aa)) are a coiled coil.

The protein is Putative KilA-N domain-containing protein R879 of Acanthamoeba polyphaga mimivirus (APMV).